A 111-amino-acid chain; its full sequence is MFSSKIRDLRVERDLNQEEVANGIGVGKNTYLAYEKGTQSPKLETVEKLAKFYGVPIAELVSDSETNIDEKLKSKIRMIESLDEPEKESLFILMEALLMRSKSREIQKEFR.

The 55-residue stretch at 6 to 60 (IRDLRVERDLNQEEVANGIGVGKNTYLAYEKGTQSPKLETVEKLAKFYGVPIAEL) folds into the HTH cro/C1-type domain. Residues 17–36 (QEEVANGIGVGKNTYLAYEK) constitute a DNA-binding region (H-T-H motif).

Functionally, transcriptional repressor of the integrated CTXPhi phage gene rstA2. In Vibrio cholerae, this protein is Cryptic phage CTXphi transcriptional repressor RstR (rstR).